A 514-amino-acid chain; its full sequence is Maltose/maltodextrin transport system permease protein MalF (514 aa).

The Cytoplasmic segment spans residues 1 to 16 (MDVIKKKHWWQSDQLK). A helical transmembrane segment spans residues 17–36 (WSVIGLLGLLVGYLVVLMYV). Topologically, residues 37–39 (QGE) are periplasmic. A helical transmembrane segment spans residues 40-57 (YLFAIMTLILSSAGLYIF). Over 58 to 69 (ANRKTYAWRYVY) the chain is Cytoplasmic. The helical transmembrane segment at 70 to 92 (PGLAGMGLFVLFPLVCTIAIAFT) threads the bilayer. Topologically, residues 93–283 (NYSSTNQLTF…QKPFFAIFVW (191 aa)) are periplasmic. In terms of domain architecture, ABC transmembrane type-1 spans 281–505 (FVWTVVFSVL…LLVGALAIVN (225 aa)). The helical transmembrane segment at 284–306 (TVVFSVLTVVLTVAVGMVLACLV) threads the bilayer. Residues 307 to 318 (QWEALKGKAIYR) lie on the Cytoplasmic side of the membrane. Residues 319 to 341 (VLLILPYAVPSFISILIFKGLFN) form a helical membrane-spanning segment. Residues 342 to 369 (QSFGEINMMLSALFGIKPAWFSDPNTAR) are Periplasmic-facing. Residues 370–392 (AMVIIVNTWLGYPYMMILCMGLL) traverse the membrane as a helical segment. Residues 393 to 412 (KAIPDDLYEASAMDGAGPFQ) are Cytoplasmic-facing. The chain crosses the membrane as a helical span at residues 413-435 (NFFKITLPLLIKPLTPLMIASFA). The Periplasmic portion of the chain corresponds to 436 to 483 (FNFNNFVLIQLLTNGGPDRLGTTTPAGYTDLLVSYTYRIAFEGGGGQD). Residues 484 to 506 (FGLAAAIATLIFLLVGALAIVNL) form a helical membrane-spanning segment. Topologically, residues 507–514 (KATRMKFD) are cytoplasmic.

This sequence belongs to the binding-protein-dependent transport system permease family. MalFG subfamily. The complex is composed of two ATP-binding proteins (MalK), two transmembrane proteins (MalG and MalF) and a solute-binding protein (MalE).

It is found in the cell inner membrane. In terms of biological role, part of the ABC transporter complex MalEFGK involved in maltose/maltodextrin import. Probably responsible for the translocation of the substrate across the membrane. The protein is Maltose/maltodextrin transport system permease protein MalF (malF) of Salmonella typhimurium (strain LT2 / SGSC1412 / ATCC 700720).